A 795-amino-acid polypeptide reads, in one-letter code: Histidine biosynthesis trifunctional protein (795 aa).

The tract at residues 1 to 225 (MLPVVPVFNA…VVRQGGSGSF (225 aa)) is phosphoribosyl-AMP cyclohydrolase. Residues 226–308 (CHLETESCFG…FYFAMARLVA (83 aa)) are phosphoribosyl-ATP pyrophosphohydrolase. A histidinol dehydrogenase region spans residues 309–795 (NGVSLEDVER…KLGLLPSGFE (487 aa)). Residues Q614 and H617 each coordinate Zn(2+). Catalysis depends on residues E683 and H684. Residues D717 and H776 each coordinate Zn(2+).

In the C-terminal section; belongs to the histidinol dehydrogenase family. Requires Zn(2+) as cofactor.

The catalysed reaction is 1-(5-phospho-beta-D-ribosyl)-5'-AMP + H2O = 1-(5-phospho-beta-D-ribosyl)-5-[(5-phospho-beta-D-ribosylamino)methylideneamino]imidazole-4-carboxamide. It carries out the reaction 1-(5-phospho-beta-D-ribosyl)-ATP + H2O = 1-(5-phospho-beta-D-ribosyl)-5'-AMP + diphosphate + H(+). The enzyme catalyses L-histidinol + 2 NAD(+) + H2O = L-histidine + 2 NADH + 3 H(+). It functions in the pathway amino-acid biosynthesis; L-histidine biosynthesis; L-histidine from 5-phospho-alpha-D-ribose 1-diphosphate: step 2/9. The protein operates within amino-acid biosynthesis; L-histidine biosynthesis; L-histidine from 5-phospho-alpha-D-ribose 1-diphosphate: step 3/9. Its pathway is amino-acid biosynthesis; L-histidine biosynthesis; L-histidine from 5-phospho-alpha-D-ribose 1-diphosphate: step 9/9. The sequence is that of Histidine biosynthesis trifunctional protein (HIS4) from Kluyveromyces lactis (strain ATCC 8585 / CBS 2359 / DSM 70799 / NBRC 1267 / NRRL Y-1140 / WM37) (Yeast).